The sequence spans 63 residues: Large ribosomal subunit protein bL28 (63 aa).

The protein belongs to the bacterial ribosomal protein bL28 family.

The protein is Large ribosomal subunit protein bL28 of Clostridium perfringens (strain SM101 / Type A).